Consider the following 1214-residue polypeptide: MYLYSLTLQQATGIVCAINGNFSGGKTQEIAVARGKILDLLRPDENGKIQTIHSVEVFGAIRSLAQFRLTGAQKDYIVVGSDSGRIVILEYNKEKNVFDKVHQETFGKSGCRRIVPGQYVAVDPKGRAVMIGACEKQKLVYVLNRDTTARLTISSPLEAHKSHTICYSLCGVDCGFDNPIFAAIELDYSEADQDPTGQAASEAQKHLTFYELDLGLNHVSRKWSNPVDNGANMLVTVPGGADGPSGVLVCAENFVIYMNQGHPDVRAVIPRRTDLPAERGVLVVSAAVHKQKTMFFFLIQTEYGDVFKVTLDHNGDHVSELKVKYFDTIPVASSICVLKLGFLFSASEFGNHGLYQFQAIGEEPDVESSSSNLMETEEGFQPVFFQPRRLKNLVRIDQVESLMPLMDMKVLNIFEEETPQIFSLCGRGPRSSLRILRPGLAITEMAVSQLPGQPSAVWTVKKNVSDEFDAYIVVSFTNATLVLSIGEQVEEVNDSGFLDTTPSLAVSLIGDDSLMQVHPNGIRHIREDGRINEWRTPGKRSIVKVGYNRLQVVIALSGGELIYFEADMTGQLMEVEKHEMSGDVACLDIAPVPEGRKRSRFLAVGSYDNTVRILSLDPDDCLQILSVQSVSSAPESLLFLEVQASIGGDDGADHPANLFLNSGLQNGVLFRTVVDMVTGQLSDSRSRFLGLKPPKLFSISVRGRSAMLCLSSRPWLGYIHRGHFHLTPLSYETLEFAAPFSSDQCAEGVVSVAGDALRIFMIDRLGETFNETVVPLRYTPRKFVLHPKRKLLVIIESDQGAFTAEEREAARKECFEAGGVGENGNGNADQMENGADDEDKEDPLSDEQYGYPKAESEKWVSCIRVLDPKTATTTCLLELQDNEAAYSVCTVNFHDKEYGTLLAVGTVKGMQFWPKKNLVAGFIHIYRFVEDGKSLELLHKTQVEGVPLALCQFQGRLLAGIGPVLRLYDLGKKRLLRKCENKLFPNTIISIQTYRDRIYVGDIQESFHYCKYRRDENQLYIFADDCVPRWLTASHHVDFDTMAGADKFGNVYFVRLPQDLSEEIEEDPTGGKIKWEQGKLNGAPNKVDEIVQFHVGDVVTCLQKASMIPGGSESIMYGTVMGSIGALHAFTSRDDVDFFSHLEMHMRQEYPPLCGRDHMAYRSAYFPVKDVIDGDLCEQFPTLPMDLQRKIADELDRTPAEILKKLEDARNKII.

The segment at 817–848 is disordered; sequence AGGVGENGNGNADQMENGADDEDKEDPLSDEQ. The segment covering 834–845 has biased composition (acidic residues); sequence GADDEDKEDPLS.

The protein belongs to the RSE1 family. Identified in the spliceosome C complex. Component of the U11/U12 snRNPs that are part of the U12-type spliceosome. Component of splicing factor SF3B complex. As to expression, expressed at low levels in roots, leaves, inflorescence and, to a lower extent, in siliques.

It localises to the nucleus. Its function is as follows. Subunit of the splicing factor SF3B required for 'A' complex assembly formed by the stable binding of U2 snRNP to the branchpoint sequence (BPS) in pre-mRNA. Sequence independent binding of SF3A/SF3B complex upstream of the branch site is essential, it may anchor U2 snRNP to the pre-mRNA. May also be involved in the assembly of the 'E' complex. Also belongs to the minor U12-dependent spliceosome, which is involved in the splicing of rare class of nuclear pre-mRNA intron. Required for pollen and ovule development, especially during the transition from microspore to the bicellular stage in pollen development. Involved in the accumulation of QRT1 and QRT3. The chain is Spliceosome-associated protein 130 A from Arabidopsis thaliana (Mouse-ear cress).